Reading from the N-terminus, the 377-residue chain is Homoserine O-acetyltransferase (377 aa).

The region spanning 48-347 is the AB hydrolase-1 domain; sequence NVVLIEHALT…PVGHDAFLTE (300 aa). Residue S143 is the Nucleophile of the active site. R213 contacts substrate. Catalysis depends on residues D311 and H341. D342 serves as a coordination point for substrate.

It belongs to the AB hydrolase superfamily. MetX family. As to quaternary structure, homodimer.

Its subcellular location is the cytoplasm. The catalysed reaction is L-homoserine + acetyl-CoA = O-acetyl-L-homoserine + CoA. It functions in the pathway amino-acid biosynthesis; L-methionine biosynthesis via de novo pathway; O-acetyl-L-homoserine from L-homoserine: step 1/1. Transfers an acetyl group from acetyl-CoA to L-homoserine, forming acetyl-L-homoserine. The protein is Homoserine O-acetyltransferase of Corynebacterium glutamicum (strain ATCC 13032 / DSM 20300 / JCM 1318 / BCRC 11384 / CCUG 27702 / LMG 3730 / NBRC 12168 / NCIMB 10025 / NRRL B-2784 / 534).